The sequence spans 466 residues: Asparagine--tRNA ligase (466 aa).

This sequence belongs to the class-II aminoacyl-tRNA synthetase family. As to quaternary structure, homodimer.

The protein resides in the cytoplasm. The enzyme catalyses tRNA(Asn) + L-asparagine + ATP = L-asparaginyl-tRNA(Asn) + AMP + diphosphate + H(+). This is Asparagine--tRNA ligase from Shewanella amazonensis (strain ATCC BAA-1098 / SB2B).